A 1011-amino-acid polypeptide reads, in one-letter code: PE-PGRS family protein PE_PGRS30 (1011 aa).

Positions 1 to 93 (MSFLLVEPDL…AAAYTGAEAA (93 aa)) constitute a PE domain. The segment at 130–696 (SNAGGNGGPG…GGTGGTGGVL (567 aa)) is PGRS domain. Residues 595–696 (GGAGGTGGDH…GGTGGTGGVL (102 aa)) show a composition bias toward gly residues. The tract at residues 595–701 (GGAGGTGGDH…TGGVLFGQSG (107 aa)) is disordered. A C-terminal domain region spans residues 697–1011 (FGQSGSSGPP…PTQLAQAIAP (315 aa)).

It belongs to the mycobacterial PE family. PGRS subfamily.

Its subcellular location is the secreted. The protein resides in the cell wall. It is found in the cell surface. In terms of biological role, mediates suppression of pro-inflammatory immune response in macrophages via modulation of host cytokine response. Required for full virulence. Involved in inhibition of phago-lysosome fusion. The protein is PE-PGRS family protein PE_PGRS30 of Mycobacterium tuberculosis (strain ATCC 25618 / H37Rv).